A 257-amino-acid polypeptide reads, in one-letter code: uncharacterized protein (257 aa).

The helical transmembrane segment at 6–26 (IFWLNLAAIIIISIVVSGGMF) threads the bilayer.

It belongs to the staphylococcal tandem lipoprotein family.

The protein resides in the cell membrane. This is an uncharacterized protein from Staphylococcus aureus (strain MSSA476).